We begin with the raw amino-acid sequence, 399 residues long: Probable peptidoglycan glycosyltransferase FtsW (399 aa).

Topologically, residues 1-32 (MMAGFAQTTITKINQFYERWMPRLPAEMTARN) are cytoplasmic. A helical membrane pass occupies residues 33–53 (VLVFCVVCLLCIGSVMVASAS). At 54–72 (MPYAEYMHENPFHYVVRHA) the chain is on the periplasmic side. Residues 73–93 (ISIATAAIVAYLVYKVPLNVW) form a helical membrane-spanning segment. The Cytoplasmic portion of the chain corresponds to 94–97 (FKNT). A helical membrane pass occupies residues 98 to 118 (FSFWLITILLLLAVLVIGTEV). Topologically, residues 119 to 126 (NGSRRWIR) are periplasmic. Residues 127–147 (LAGFTLQPTEVAKVMMAIFTA) form a helical membrane-spanning segment. The Cytoplasmic segment spans residues 148-159 (DYVVRRAKEVRT). A helical membrane pass occupies residues 160 to 180 (HWKGLVRLSGVMAITVGLIIA). At 181–183 (EPD) the chain is on the periplasmic side. The helical transmembrane segment at 184–204 (LGATVVIVLMMVGIFFLAGAP) threads the bilayer. The Cytoplasmic segment spans residues 205 to 207 (PTQ). A helical transmembrane segment spans residues 208–228 (FAIMLGAVVMGIGFLILFEPY). Topologically, residues 229–292 (RLARAMSFTN…DFMLAVLGEE (64 aa)) are periplasmic. The helical transmembrane segment at 293–313 (FGFVGISIVIGLSFIMLACCI) threads the bilayer. The Cytoplasmic segment spans residues 314–327 (KIGHRALKHNFLRA). Residues 328–348 (GYLAYGISIIFLLQIIVNAGM) form a helical membrane-spanning segment. Residues 349–359 (NMGLMPTKGLT) are Periplasmic-facing. The chain crosses the membrane as a helical span at residues 360 to 380 (LPFISYGGTSLMMCAAMISLI). Residues 381–399 (LRIDASTQEINPDREESNF) lie on the Cytoplasmic side of the membrane.

Belongs to the SEDS family. FtsW subfamily.

It localises to the cell inner membrane. The enzyme catalyses [GlcNAc-(1-&gt;4)-Mur2Ac(oyl-L-Ala-gamma-D-Glu-L-Lys-D-Ala-D-Ala)](n)-di-trans,octa-cis-undecaprenyl diphosphate + beta-D-GlcNAc-(1-&gt;4)-Mur2Ac(oyl-L-Ala-gamma-D-Glu-L-Lys-D-Ala-D-Ala)-di-trans,octa-cis-undecaprenyl diphosphate = [GlcNAc-(1-&gt;4)-Mur2Ac(oyl-L-Ala-gamma-D-Glu-L-Lys-D-Ala-D-Ala)](n+1)-di-trans,octa-cis-undecaprenyl diphosphate + di-trans,octa-cis-undecaprenyl diphosphate + H(+). Its pathway is cell wall biogenesis; peptidoglycan biosynthesis. Functionally, peptidoglycan polymerase that is essential for cell division. This Acinetobacter baylyi (strain ATCC 33305 / BD413 / ADP1) protein is Probable peptidoglycan glycosyltransferase FtsW.